We begin with the raw amino-acid sequence, 307 residues long: Serine/threonine-protein phosphatase 4 catalytic subunit (307 aa).

Position 2 is an N-acetylalanine (A2). 4 residues coordinate Mn(2+): D54, H56, D82, and N114. H115 (proton donor) is an active-site residue. Residues H164 and H238 each contribute to the Mn(2+) site. L307 bears the Leucine methyl ester mark.

This sequence belongs to the PPP phosphatase family. PP-4 (PP-X) subfamily. As to quaternary structure, serine/threonine-protein phosphatase 4 (PP4) occurs in different assemblies of the catalytic and one or more regulatory subunits. Component of the PP4 complexes PPP4C-PPP4R1, PPP4C-PPP4R2, PPP4C-PPP4R2-PPP4R3A, PPP4C-PPP4R2-PPP4R3B and PPP4C-PPP4R4. The PPP4C-PPP4R2 complex appears to be a tetramer composed of 2 molecules of PPP4C and 2 molecules of PPP4R2. Interacts with REL, NFKB1/p50 and RELA. Interacts with SMN1 and GEMIN4. Interacts with IRS4 (phosphorylated). Interacts with SMEK1/PPP4R3A; the interaction requires PP4R2. Interacts with HDAC3. Requires Mn(2+) as cofactor. Methylation at the C-terminal Leu-307 is critical for interactions with regulatory subunits and functions in DNA repair.

The protein localises to the cytoplasm. It is found in the nucleus. The protein resides in the cytoskeleton. Its subcellular location is the microtubule organizing center. It localises to the centrosome. It catalyses the reaction O-phospho-L-seryl-[protein] + H2O = L-seryl-[protein] + phosphate. The catalysed reaction is O-phospho-L-threonyl-[protein] + H2O = L-threonyl-[protein] + phosphate. Protein phosphatase that is involved in many processes such as microtubule organization at centrosomes, maturation of spliceosomal snRNPs, apoptosis, DNA repair, tumor necrosis factor (TNF)-alpha signaling, activation of c-Jun N-terminal kinase MAPK8, regulation of histone acetylation, DNA damage checkpoint signaling, NF-kappa-B activation and cell migration. The PPP4C-PPP4R1 PP4 complex may play a role in dephosphorylation and regulation of HDAC3. The PPP4C-PPP4R2-PPP4R3A PP4 complex specifically dephosphorylates H2AX phosphorylated on Ser-140 (gamma-H2AX) generated during DNA replication and required for DNA double strand break repair. Dephosphorylates NDEL1 at CDK1 phosphorylation sites and negatively regulates CDK1 activity in interphase. In response to DNA damage, catalyzes RPA2 dephosphorylation, an essential step for DNA repair since it allows the efficient RPA2-mediated recruitment of RAD51 to chromatin. This is Serine/threonine-protein phosphatase 4 catalytic subunit (PPP4C) from Homo sapiens (Human).